Consider the following 114-residue polypeptide: Large ribosomal subunit protein P2 (114 aa).

A compositionally biased stretch (low complexity) spans 76 to 91 (PAAAAAAGGGDSSSAA). A disordered region spans residues 76–114 (PAAAAAAGGGDSSSAAKETKKEEPEEEEEDGDMGLSLFD).

It belongs to the eukaryotic ribosomal protein P1/P2 family. As to quaternary structure, P1 and P2 exist as dimers at the large ribosomal subunit. Phosphorylated.

Plays an important role in the elongation step of protein synthesis. This is Large ribosomal subunit protein P2 from Eimeria tenella (Coccidian parasite).